We begin with the raw amino-acid sequence, 268 residues long: Indole-3-glycerol phosphate synthase (268 aa).

This sequence belongs to the TrpC family.

The enzyme catalyses 1-(2-carboxyphenylamino)-1-deoxy-D-ribulose 5-phosphate + H(+) = (1S,2R)-1-C-(indol-3-yl)glycerol 3-phosphate + CO2 + H2O. The protein operates within amino-acid biosynthesis; L-tryptophan biosynthesis; L-tryptophan from chorismate: step 4/5. The protein is Indole-3-glycerol phosphate synthase of Acinetobacter baumannii (strain AB0057).